The sequence spans 353 residues: Beta-hexosaminidase (353 aa).

Residues aspartate 74, arginine 82, arginine 149, and 179 to 180 each bind substrate; that span reads KH. The active-site Proton donor/acceptor is histidine 192. The active-site Nucleophile is the aspartate 263.

Belongs to the glycosyl hydrolase 3 family. NagZ subfamily.

The protein localises to the cytoplasm. It carries out the reaction Hydrolysis of terminal non-reducing N-acetyl-D-hexosamine residues in N-acetyl-beta-D-hexosaminides.. The protein operates within cell wall biogenesis; peptidoglycan recycling. Its function is as follows. Plays a role in peptidoglycan recycling by cleaving the terminal beta-1,4-linked N-acetylglucosamine (GlcNAc) from peptide-linked peptidoglycan fragments, giving rise to free GlcNAc, anhydro-N-acetylmuramic acid and anhydro-N-acetylmuramic acid-linked peptides. This chain is Beta-hexosaminidase, found in Bordetella bronchiseptica (strain ATCC BAA-588 / NCTC 13252 / RB50) (Alcaligenes bronchisepticus).